The sequence spans 76 residues: UPF0352 protein PC1_1633 (76 aa).

The protein belongs to the UPF0352 family.

The sequence is that of UPF0352 protein PC1_1633 from Pectobacterium carotovorum subsp. carotovorum (strain PC1).